The sequence spans 365 residues: Protein RecA (365 aa).

69–76 (GPESSGKT) lines the ATP pocket. Positions 344–365 (LDDNPDTDDHDVEDIDENTDEE) are disordered. Acidic residues predominate over residues 347–365 (NPDTDDHDVEDIDENTDEE).

This sequence belongs to the RecA family.

It localises to the cytoplasm. Functionally, can catalyze the hydrolysis of ATP in the presence of single-stranded DNA, the ATP-dependent uptake of single-stranded DNA by duplex DNA, and the ATP-dependent hybridization of homologous single-stranded DNAs. It interacts with LexA causing its activation and leading to its autocatalytic cleavage. In Arthrospira platensis (Spirulina platensis), this protein is Protein RecA.